The primary structure comprises 336 residues: Glyceraldehyde-3-phosphate dehydrogenase (336 aa).

Residues 12-13 (RI), Asp34, and Arg79 each bind NAD(+). D-glyceraldehyde 3-phosphate is bound by residues 150–152 (SCT), Thr181, 210–211 (TG), and Arg233. Catalysis depends on Cys151, which acts as the Nucleophile. Asn315 is a binding site for NAD(+).

Belongs to the glyceraldehyde-3-phosphate dehydrogenase family. In terms of assembly, homotetramer.

The protein resides in the cytoplasm. It carries out the reaction D-glyceraldehyde 3-phosphate + phosphate + NAD(+) = (2R)-3-phospho-glyceroyl phosphate + NADH + H(+). The protein operates within carbohydrate degradation; glycolysis; pyruvate from D-glyceraldehyde 3-phosphate: step 1/5. The sequence is that of Glyceraldehyde-3-phosphate dehydrogenase (gpdA) from Aspergillus niger.